The sequence spans 334 residues: Phosphate acyltransferase (334 aa).

This sequence belongs to the PlsX family. In terms of assembly, homodimer. Probably interacts with PlsY.

The protein localises to the cytoplasm. It catalyses the reaction a fatty acyl-[ACP] + phosphate = an acyl phosphate + holo-[ACP]. It functions in the pathway lipid metabolism; phospholipid metabolism. Functionally, catalyzes the reversible formation of acyl-phosphate (acyl-PO(4)) from acyl-[acyl-carrier-protein] (acyl-ACP). This enzyme utilizes acyl-ACP as fatty acyl donor, but not acyl-CoA. This chain is Phosphate acyltransferase, found in Acholeplasma laidlawii (strain PG-8A).